Here is a 243-residue protein sequence, read N- to C-terminus: Ubiquinone/menaquinone biosynthesis C-methyltransferase UbiE (243 aa).

S-adenosyl-L-methionine is bound by residues Thr69, Asp90, and 116–117 (DA).

The protein belongs to the class I-like SAM-binding methyltransferase superfamily. MenG/UbiE family.

The enzyme catalyses a 2-demethylmenaquinol + S-adenosyl-L-methionine = a menaquinol + S-adenosyl-L-homocysteine + H(+). It carries out the reaction a 2-methoxy-6-(all-trans-polyprenyl)benzene-1,4-diol + S-adenosyl-L-methionine = a 5-methoxy-2-methyl-3-(all-trans-polyprenyl)benzene-1,4-diol + S-adenosyl-L-homocysteine + H(+). The protein operates within quinol/quinone metabolism; menaquinone biosynthesis; menaquinol from 1,4-dihydroxy-2-naphthoate: step 2/2. Its pathway is cofactor biosynthesis; ubiquinone biosynthesis. Functionally, methyltransferase required for the conversion of demethylmenaquinol (DMKH2) to menaquinol (MKH2) and the conversion of 2-polyprenyl-6-methoxy-1,4-benzoquinol (DDMQH2) to 2-polyprenyl-3-methyl-6-methoxy-1,4-benzoquinol (DMQH2). This chain is Ubiquinone/menaquinone biosynthesis C-methyltransferase UbiE, found in Burkholderia mallei (strain NCTC 10247).